A 223-amino-acid polypeptide reads, in one-letter code: MSDLKTTKDTLVSTLFELSKAAQDAANAAIEFYKVASGGSDHVSAEQLKAVSEALNTVATLSSGNGAKIEATESKKKRKQEKDPNAPKKPLTMFFQFSYDLRKKIGIERKKKDLPSLSAIDMNSMIKDRWDSISEAEKAGYKKRYDDAMIIYNIEKKKYEESLKDGSAYYPPPSVQTPIVGHGIEQDFDDDATDIVSSPEEPKKKKKKTEKKEKKKKSGHGSP.

2 disordered regions span residues 69–89 (IEATESKKKRKQEKDPNAPKK) and 165–223 (DGSA…HGSP). The span at 70 to 86 (EATESKKKRKQEKDPNA) shows a compositional bias: basic and acidic residues. The HMG box DNA-binding region spans 87 to 160 (PKKPLTMFFQ…IYNIEKKKYE (74 aa)). Positions 204–223 (KKKKKTEKKEKKKKSGHGSP) are enriched in basic residues.

It is found in the nucleus. Its function is as follows. Transcription factor that binds upstream of hexose and ergosterol metabolism, as well as cell cycle genes. Activates pseudohyphal growth. The polypeptide is Transcriptional regulator HMO1 (HMO1) (Candida albicans (strain SC5314 / ATCC MYA-2876) (Yeast)).